We begin with the raw amino-acid sequence, 364 residues long: Dihydroorotate dehydrogenase (quinone) (364 aa).

Residues 61–65 (AGFDK) and Ser85 each bind FMN. Residue Lys65 coordinates substrate. Position 110-114 (110-114 (NRMGF)) interacts with substrate. Asn139 and Asn170 together coordinate FMN. Asn170 contributes to the substrate binding site. The active-site Nucleophile is the Ser173. Asn175 contacts substrate. 2 residues coordinate FMN: Lys214 and Ser242. 243-244 (NT) serves as a coordination point for substrate. Residues Gly266, Gly295, and 316–317 (YS) contribute to the FMN site.

The protein belongs to the dihydroorotate dehydrogenase family. Type 2 subfamily. In terms of assembly, monomer. It depends on FMN as a cofactor.

The protein localises to the cell membrane. The catalysed reaction is (S)-dihydroorotate + a quinone = orotate + a quinol. The protein operates within pyrimidine metabolism; UMP biosynthesis via de novo pathway; orotate from (S)-dihydroorotate (quinone route): step 1/1. Functionally, catalyzes the conversion of dihydroorotate to orotate with quinone as electron acceptor. This Bradyrhizobium sp. (strain ORS 278) protein is Dihydroorotate dehydrogenase (quinone).